Reading from the N-terminus, the 669-residue chain is JmjC domain-containing histone demethylation protein 1 (669 aa).

Residues 1 to 61 are disordered; that stretch reads MTAVAASSRV…RRKKPRTELV (61 aa). Polar residues-rich tracts occupy residues 16-27 and 36-49; these read ASSSAHPRTLRS and HDSSISPSAAQSKQ. The segment at 65–126 adopts a PHD-type zinc-finger fold; it reads ELDCAACPAV…KWYCQPCITR (62 aa). Disordered stretches follow at residues 131–150 and 220–256; these read FESGTSSSHPPFANVVRPPR and PPDRSSQAPHVQAKAEDVAASPVPRPKPARAKKQATH. Residues 246-255 are compositionally biased toward basic residues; that stretch reads KPARAKKQAT. The JmjC domain maps to 332 to 494; sequence VTGTPMQAYV…TQWKLVEIEE (163 aa). Fe cation-binding residues include H390 and D392. Residue K407 coordinates substrate. Position 462 (H462) interacts with Fe cation.

Belongs to the JHDM1 histone demethylase family. Fe(2+) serves as cofactor.

The protein localises to the nucleus. The catalysed reaction is N(6),N(6)-dimethyl-L-lysyl(36)-[histone H3] + 2 2-oxoglutarate + 2 O2 = L-lysyl(36)-[histone H3] + 2 formaldehyde + 2 succinate + 2 CO2. Histone demethylase that specifically demethylates 'Lys-36' of histone H3, thereby playing a central role in histone code. The chain is JmjC domain-containing histone demethylation protein 1 (JHD1) from Mycosarcoma maydis (Corn smut fungus).